A 272-amino-acid chain; its full sequence is Ribosomal RNA small subunit methyltransferase A (272 aa).

The S-adenosyl-L-methionine site is built by Asn20, Leu22, Gly47, Glu68, Asp93, and Asn114.

Belongs to the class I-like SAM-binding methyltransferase superfamily. rRNA adenine N(6)-methyltransferase family. RsmA subfamily.

The protein resides in the cytoplasm. The catalysed reaction is adenosine(1518)/adenosine(1519) in 16S rRNA + 4 S-adenosyl-L-methionine = N(6)-dimethyladenosine(1518)/N(6)-dimethyladenosine(1519) in 16S rRNA + 4 S-adenosyl-L-homocysteine + 4 H(+). Functionally, specifically dimethylates two adjacent adenosines (A1518 and A1519) in the loop of a conserved hairpin near the 3'-end of 16S rRNA in the 30S particle. May play a critical role in biogenesis of 30S subunits. This chain is Ribosomal RNA small subunit methyltransferase A, found in Aliivibrio fischeri (strain ATCC 700601 / ES114) (Vibrio fischeri).